The chain runs to 622 residues: Elongation factor 4 (622 aa).

The tr-type G domain maps to 17-201; the sequence is ALIRNFCIIA…KVVAEVPAPV (185 aa). Residues 29 to 34 and 148 to 151 each bind GTP; these read DHGKST and NKID.

It belongs to the TRAFAC class translation factor GTPase superfamily. Classic translation factor GTPase family. LepA subfamily.

It is found in the cell membrane. The catalysed reaction is GTP + H2O = GDP + phosphate + H(+). Functionally, required for accurate and efficient protein synthesis under certain stress conditions. May act as a fidelity factor of the translation reaction, by catalyzing a one-codon backward translocation of tRNAs on improperly translocated ribosomes. Back-translocation proceeds from a post-translocation (POST) complex to a pre-translocation (PRE) complex, thus giving elongation factor G a second chance to translocate the tRNAs correctly. Binds to ribosomes in a GTP-dependent manner. This Streptomyces avermitilis (strain ATCC 31267 / DSM 46492 / JCM 5070 / NBRC 14893 / NCIMB 12804 / NRRL 8165 / MA-4680) protein is Elongation factor 4.